We begin with the raw amino-acid sequence, 168 residues long: Crossover junction endodeoxyribonuclease RuvC (168 aa).

Catalysis depends on residues D10, E70, and D143. Residues D10, E70, and D143 each contribute to the Mg(2+) site.

It belongs to the RuvC family. Homodimer which binds Holliday junction (HJ) DNA. The HJ becomes 2-fold symmetrical on binding to RuvC with unstacked arms; it has a different conformation from HJ DNA in complex with RuvA. In the full resolvosome a probable DNA-RuvA(4)-RuvB(12)-RuvC(2) complex forms which resolves the HJ. The cofactor is Mg(2+).

The protein resides in the cytoplasm. It carries out the reaction Endonucleolytic cleavage at a junction such as a reciprocal single-stranded crossover between two homologous DNA duplexes (Holliday junction).. The RuvA-RuvB-RuvC complex processes Holliday junction (HJ) DNA during genetic recombination and DNA repair. Endonuclease that resolves HJ intermediates. Cleaves cruciform DNA by making single-stranded nicks across the HJ at symmetrical positions within the homologous arms, yielding a 5'-phosphate and a 3'-hydroxyl group; requires a central core of homology in the junction. The consensus cleavage sequence is 5'-(A/T)TT(C/G)-3'. Cleavage occurs on the 3'-side of the TT dinucleotide at the point of strand exchange. HJ branch migration catalyzed by RuvA-RuvB allows RuvC to scan DNA until it finds its consensus sequence, where it cleaves and resolves the cruciform DNA. The protein is Crossover junction endodeoxyribonuclease RuvC of Thermotoga maritima (strain ATCC 43589 / DSM 3109 / JCM 10099 / NBRC 100826 / MSB8).